The chain runs to 782 residues: cGMP-specific 3',5'-cyclic phosphodiesterase gamma (782 aa).

Over 1–69 the chain is Cytoplasmic; that stretch reads MKHMFKNILF…LCDNMYSKKY (69 aa). A helical membrane pass occupies residues 70-90; that stretch reads VILVSHLISLLLMYSVCLIVG. The Extracellular portion of the chain corresponds to 91 to 97; that stretch reads NINDLFS. The helical transmembrane segment at 98 to 118 threads the bilayer; sequence VLKLTYILLHTFTAINIILIL. The Cytoplasmic portion of the chain corresponds to 119–135; sequence TLHATHYVEMFKSIKGE. A helical transmembrane segment spans residues 136–156; the sequence is IFIFYIMMIFVIWCSWLFILF. Over 157 to 181 the chain is Extracellular; the sequence is NNIKDLLPIVVNVNNFLYATYANNK. The chain crosses the membrane as a helical span at residues 182-202; sequence INIVLGFFAYLPIFYLITIIP. The Cytoplasmic segment spans residues 203-208; the sequence is CRICYS. Residues 209-229 traverse the membrane as a helical segment; that stretch reads CAFDILFFIMKVAIFSVYYLI. At 230–239 the chain is on the extracellular side; sequence TMKSYILTDN. A helical membrane pass occupies residues 240 to 260; sequence IFMIISALVGSLFIFVIRYII. The Cytoplasmic portion of the chain corresponds to 261–782; the sequence is EIQRRLSFHN…YAPNLNIYKL (522 aa). The segment at 376–396 is disordered; the sequence is GSKEEPEAESESECVDESKEG. The segment covering 381–390 has biased composition (acidic residues); the sequence is PEAESESECV. The 329-residue stretch at 423–751 folds into the PDEase domain; that stretch reads YEEKENEILK…SKWTKIEKDE (329 aa). H504 serves as the catalytic Proton donor. 504–508 provides a ligand contact to a nucleoside 3',5'-cyclic phosphate; that stretch reads HNSIH. A divalent metal cation-binding residues include H508, H544, D545, and D654. Residues D545, D654, and Q706 each contribute to the a nucleoside 3',5'-cyclic phosphate site.

The protein belongs to the cyclic nucleotide phosphodiesterase family. The cofactor is a divalent metal cation.

It localises to the membrane. Its subcellular location is the endoplasmic reticulum membrane. It catalyses the reaction 3',5'-cyclic GMP + H2O = GMP + H(+). It functions in the pathway purine metabolism; 3',5'-cyclic GMP degradation; GMP from 3',5'-cyclic GMP: step 1/1. Functionally, specifically hydrolyzes the second messenger cGMP, which is a key regulator of many important physiological processes. Probably by regulating cGMP levels, required for sporozoite motility and invasion of the mosquito salivary glands. The sequence is that of cGMP-specific 3',5'-cyclic phosphodiesterase gamma from Plasmodium yoelii.